We begin with the raw amino-acid sequence, 201 residues long: Probable GTP-binding protein EngB (201 aa).

Residues 22–197 (TFPEYAFIGR…LNYIESINKE (176 aa)) enclose the EngB-type G domain. GTP is bound by residues 30 to 37 (GRSNVGKS), 57 to 61 (GKTML), 75 to 78 (DLPG), 142 to 145 (TKAD), and 175 to 178 (ITSS). Residues S37 and T59 each coordinate Mg(2+).

This sequence belongs to the TRAFAC class TrmE-Era-EngA-EngB-Septin-like GTPase superfamily. EngB GTPase family. Mg(2+) serves as cofactor.

Necessary for normal cell division and for the maintenance of normal septation. This Bacteroides fragilis (strain ATCC 25285 / DSM 2151 / CCUG 4856 / JCM 11019 / LMG 10263 / NCTC 9343 / Onslow / VPI 2553 / EN-2) protein is Probable GTP-binding protein EngB.